Reading from the N-terminus, the 633-residue chain is Threonine--tRNA ligase (633 aa).

Residues 1–61 (MINVYFSDNS…TEDCKFEVIT (61 aa)) enclose the TGS domain. Positions 242-533 (DHRKIGKELE…LIEHHSGKLP (292 aa)) are catalytic. Residues Cys-333, His-384, and His-510 each coordinate Zn(2+).

It belongs to the class-II aminoacyl-tRNA synthetase family. As to quaternary structure, homodimer. The cofactor is Zn(2+).

It is found in the cytoplasm. It carries out the reaction tRNA(Thr) + L-threonine + ATP = L-threonyl-tRNA(Thr) + AMP + diphosphate + H(+). Its function is as follows. Catalyzes the attachment of threonine to tRNA(Thr) in a two-step reaction: L-threonine is first activated by ATP to form Thr-AMP and then transferred to the acceptor end of tRNA(Thr). Also edits incorrectly charged L-seryl-tRNA(Thr). This is Threonine--tRNA ligase from Ehrlichia ruminantium (strain Welgevonden).